The sequence spans 227 residues: Small ribosomal subunit protein uS3 (227 aa).

Residues Val39–Arg107 enclose the KH type-2 domain.

It belongs to the universal ribosomal protein uS3 family. In terms of assembly, part of the 30S ribosomal subunit. Forms a tight complex with proteins S10 and S14.

Its function is as follows. Binds the lower part of the 30S subunit head. Binds mRNA in the 70S ribosome, positioning it for translation. The protein is Small ribosomal subunit protein uS3 (rpsC) of Coxiella burnetii (strain RSA 493 / Nine Mile phase I).